A 317-amino-acid chain; its full sequence is Metaxin-1 (317 aa).

Residues Lys38, Lys41, Lys78, and Lys168 each participate in a glycyl lysine isopeptide (Lys-Gly) (interchain with G-Cter in ubiquitin) cross-link. A helical transmembrane segment spans residues 272 to 292 (ILSVLAGLAAMVGYALLSGIV).

This sequence belongs to the metaxin family. Interacts with MTX2/metaxin-2. Associates with the mitochondrial contact site and cristae organizing system (MICOS) complex, composed of at least MICOS10/MIC10, CHCHD3/MIC19, CHCHD6/MIC25, APOOL/MIC27, IMMT/MIC60, APOO/MIC23/MIC26 and QIL1/MIC13. This complex was also known under the names MINOS or MitOS complex. The MICOS complex associates with mitochondrial outer membrane proteins SAMM50, MTX1 and MTX2 (together described as components of the mitochondrial outer membrane sorting assembly machinery (SAM) complex) and DNAJC11, mitochondrial inner membrane protein TMEM11 and with HSPA9. The MICOS and SAM complexes together with DNAJC11 are part of a large protein complex spanning both membranes termed the mitochondrial intermembrane space bridging (MIB) complex. Interacts with ARMC1. Ubiquitinated by PRKN during mitophagy, leading to its degradation and enhancement of mitophagy. Deubiquitinated by USP30. As to expression, ubiquitous. Higher levels are seen in the kidney as compared to other tissues.

Its subcellular location is the mitochondrion outer membrane. In terms of biological role, involved in transport of proteins into the mitochondrion. Essential for embryonic development. In Mus musculus (Mouse), this protein is Metaxin-1 (Mtx1).